The chain runs to 392 residues: Protein NolC (392 aa).

One can recognise a J domain in the interval 2–71 (KRDLYETLGV…RAAYDRYGHA (70 aa)). Disordered regions lie at residues 103 to 142 (RRDD…QDGA) and 157 to 244 (LGRE…TGLR). A compositionally biased stretch (basic and acidic residues) spans 157 to 170 (LGREAGHQPEDLRH). Positions 171–185 (LPGLRPYPRRPGLLL) are enriched in low complexity. Over residues 186–203 (DRTHLPDLRRSRSDDHRS) the composition is skewed to basic and acidic residues. Residues 227 to 241 (HRGRHAYPPLRRGRT) show a composition bias toward basic residues.

This chain is Protein NolC (nolC), found in Rhizobium fredii (Sinorhizobium fredii).